A 303-amino-acid chain; its full sequence is Probable 5-dehydro-4-deoxyglucarate dehydratase (303 aa).

Belongs to the DapA family.

The catalysed reaction is 5-dehydro-4-deoxy-D-glucarate + H(+) = 2,5-dioxopentanoate + CO2 + H2O. Its pathway is carbohydrate acid metabolism; D-glucarate degradation; 2,5-dioxopentanoate from D-glucarate: step 2/2. This is Probable 5-dehydro-4-deoxyglucarate dehydratase from Pseudomonas fluorescens (strain Pf0-1).